The primary structure comprises 444 residues: Elongation factor 1-alpha (444 aa).

One can recognise a tr-type G domain in the interval 15–236; sequence KPHINLAVVG…VLDTFQPPPR (222 aa). The G1 stretch occupies residues 24–31; it reads GHVDNGKS. 24–31 lines the GTP pocket; sequence GHVDNGKS. Ser31 serves as a coordination point for Mg(2+). A G2 region spans residues 80–84; the sequence is GVTIE. A G3 region spans residues 101–104; it reads DLPG. Residues 101-105 and 163-166 contribute to the GTP site; these read DLPGH and NKMD. Residues 163-166 are G4; it reads NKMD. Positions 202–204 are G5; the sequence is SAV.

It belongs to the TRAFAC class translation factor GTPase superfamily. Classic translation factor GTPase family. EF-Tu/EF-1A subfamily.

The protein resides in the cytoplasm. It carries out the reaction GTP + H2O = GDP + phosphate + H(+). In terms of biological role, GTP hydrolase that promotes the GTP-dependent binding of aminoacyl-tRNA to the A-site of ribosomes during protein biosynthesis. This Pyrobaculum arsenaticum (strain DSM 13514 / JCM 11321 / PZ6) protein is Elongation factor 1-alpha.